The chain runs to 464 residues: Methionine aminopeptidase 2 (464 aa).

The tract at residues 1 to 86 is disordered; that stretch reads MGSKTPGNHR…RKKKKKNTKE (86 aa). The segment covering 43-54 has biased composition (acidic residues); the sequence is GESEGGEDEDDD. Residues 72-83 are compositionally biased toward basic residues; the sequence is KRNKRRKKKKKN. His-216 contacts substrate. The a divalent metal cation site is built by Asp-237, Asp-248, and His-317. His-325 is a substrate binding site. Positions 350 and 445 each coordinate a divalent metal cation.

This sequence belongs to the peptidase M24A family. Methionine aminopeptidase eukaryotic type 2 subfamily. It depends on Co(2+) as a cofactor. Requires Zn(2+) as cofactor. Mn(2+) serves as cofactor. The cofactor is Fe(2+).

Its subcellular location is the cytoplasm. The enzyme catalyses Release of N-terminal amino acids, preferentially methionine, from peptides and arylamides.. Its function is as follows. Cotranslationally removes the N-terminal methionine from nascent proteins. The N-terminal methionine is often cleaved when the second residue in the primary sequence is small and uncharged (Met-Ala-, Cys, Gly, Pro, Ser, Thr, or Val). In Ajellomyces capsulatus (strain NAm1 / WU24) (Darling's disease fungus), this protein is Methionine aminopeptidase 2.